We begin with the raw amino-acid sequence, 913 residues long: MDKKSFETVLDEIRKAVLTEYKLKAIEYVHGYFSSEQVVDLLRYFSWAEPQLKAMKALQHKMVAVHPAEVVSILSCFTFSKDKLAALELLASNIVDAQNSRPIEDLFRINMSEKKRCKRVLEQASKAGCKAPHAMISSCGTFPGNPYPKGKPSRINGIFPGTPLKKDGEEITNEGKGIAARILGPSKPPPSTYNPHKPVPYPIPPCRPHATIAPSAYNNAGLVPLANVIAPGVPPPPPYTPNPAGTDNEDLSSQSKPTQSQTFSTPASQLFSPHGSSNPSTPAATPVPAVSPAKAVNHPSVSAAATGAGMSATNTALAVFPTPQPNTPNPTVIRTPSVPATPVTSTHSTTPTPVPSVFSGLVPLPGLSATPTLPTQASSISRVTLASSETFASTCAPFSGHSSASSTAGSASNPITAPLSSVFAGLPLPFPPASHSIATPTPSVIASAAGPHGVNSPLLSALKGFLTSNDTHLINSSALPSAVTSGLASLSSLPNRNSDSPASATNKCYPPAAVPAAQRSSTPGLAMFPGLQSPVASATSVAPTLPAQSPLATPSTAVPVSCGSSGSLLHGPHAGGISSAPAAATMPVMIKSEPTSPPPSAFKGPAHPGTPVRGTLGLSGALGRGYPTTSVPISVSTCLNPALSGLSSLSTPLAGSMSLPPHASSTPIAPVFTALPPFTSLTNSFPLPGSPSLNPAVSLAGSSTTTTSAAVHPSSATVRSVLPTSNASPAAFPLNLSTAVPSLFAVTQGPLPTSNPSYPGFPVSSAPSGAPTLPSFPGLQAPSTVAVTPLPVAASAPSPAPVLPGFASAFSSNFNSALVAQAGLSSGLQAAGSSVFPGLLSLPGIPGFSQAPPQSSLQELQHSAAAQSALLQQVHSASALESYPAQADGFPSYPSTPGTPFSLQTGLSQSGWQ.

Position 1 is an N-acetylmethionine (M1). Disordered regions lie at residues V233–S291, A488–K507, S592–L618, and D888–Q913. The span at L251 to G275 shows a compositional bias: polar residues. Low complexity predominate over residues S276–S291. A compositionally biased stretch (polar residues) spans A488–N506. Residues Y893–Q913 are compositionally biased toward polar residues.

As to quaternary structure, interacts with TET2 and OGT; this interaction mediates TET2 O-GlcNAcylation and stability by promoting the interaction between OGT and TET2. Interacts with KDM6A. Interacts with TET1. Post-translationally, glycosylated. Interaction with OGT leads to GlcNAcylation.

Mediates OGT interaction with and O-GlcNAcylation of TET2 to control TET2 stabilization at enhancers and CpG islands (CGIs). The sequence is that of Proline and serine-rich protein 1 from Mus musculus (Mouse).